An 814-amino-acid chain; its full sequence is Flagellar radial spoke protein 1 (814 aa).

Asymmetric dimethylarginine is present on R243. A disordered region spans residues 283 to 346; that stretch reads VQSISTGNRE…PPPPAPKVDP (64 aa). Positions 303-329 are enriched in acidic residues; that stretch reads PEEDEEEEKEEEKEEPEEGEEGEEGEG. R428 bears the Asymmetric dimethylarginine mark. MORN repeat units lie at residues 577 to 597, 600 to 622, 623 to 645, 646 to 662, 671 to 685, and 691 to 707; these read YFGSYADDVKHGPGLYAFATG, YAGEYAGGKRHGRGVMVFPDGGT, YVGEFVADKFEGQGQYRYPDGSV, YTGSWAAGQKHGPGVYW, GEWKKGLLVGKGTYE, and FEGEFVRGMPAGTATYT. The disordered stretch occupies residues 739–769; that stretch reads GIPPGSGDEPQLDEEGQPIEDTDKPPLPAHP. The span at 748 to 758 shows a compositional bias: acidic residues; it reads PQLDEEGQPIE.

In terms of processing, asymmetrically dimethylated at Arg-243 and Arg-428 during flagellum resorption. Probably methylated by PRMT1.

Its subcellular location is the cytoplasm. The protein localises to the cytoskeleton. It localises to the flagellum axoneme. Its function is as follows. Flagellar radial spokes contribute to the regulation of dynein arm activity and thus the pattern of flagellar bending. They consist of a thin stalk, which is attached to the a subfiber of the outer doublet microtubule, and a bulbous head, which is attached to the stalk and appears to interact with the projections from the central pair of microtubules. This chain is Flagellar radial spoke protein 1, found in Chlamydomonas reinhardtii (Chlamydomonas smithii).